Reading from the N-terminus, the 121-residue chain is SLFELGKMILQETGKNPAKSYGAYGCNCGVLGRGQPKDATDRCCYVHKCCYKKLTGCDPKKDRYSYSWKDKTIVCGENNPCLKELCECDKAVAICLRENLGTYNKKYRYHLKPFCKKADPC.

7 cysteine pairs are disulfide-bonded: Cys26-Cys115, Cys28-Cys44, Cys43-Cys95, Cys49-Cys121, Cys50-Cys88, Cys57-Cys81, and Cys75-Cys86. The important for membrane-damaging activities in eukaryotes and bacteria; heparin-binding stretch occupies residues Lys105 to Lys117.

The protein belongs to the phospholipase A2 family. Group II subfamily. K49 sub-subfamily. As to quaternary structure, homodimer; non-covalently linked (probable alternative/compact dimer conformation in solution). In terms of tissue distribution, expressed by the venom gland.

Its subcellular location is the secreted. Its activity is regulated as follows. Heparin inhibits the neuromuscular effect, myotoxin activity and edema-inducing effects. Bromophenacyl bromide (BPB) inhibits the neuromuscular effect, the myotoxin activity and edema-inducing effects. In terms of biological role, snake venom phospholipase A2 (PLA2) that lacks enzymatic activity. Is myotoxic and displays edema-inducing activity. Displays bactericidal activity and promotes the blockage of the neuromuscular contraction of the chick biventer cervicis muscle. Also disrupts artificial membranes, and provokes tissue damages characterized by edema, necrosis and inflammation. May act as pro-inflammatory mediators, inducing metalloproteinase and cytokine production from the inflammatory and satellite cells. A model of myotoxic mechanism has been proposed: an apo Lys49-PLA2 is activated by the entrance of a hydrophobic molecule (e.g. fatty acid) at the hydrophobic channel of the protein leading to a reorientation of a monomer. This reorientation causes a transition between 'inactive' to 'active' states, causing alignment of C-terminal and membrane-docking sites (MDoS) side-by-side and putting the membrane-disruption sites (MDiS) in the same plane, exposed to solvent and in a symmetric position for both monomers. The MDoS region stabilizes the toxin on membrane by the interaction of charged residues with phospholipid head groups. Subsequently, the MDiS region destabilizes the membrane with penetration of hydrophobic residues. This insertion causes a disorganization of the membrane, allowing an uncontrolled influx of ions (i.e. calcium and sodium), and eventually triggering irreversible intracellular alterations and cell death. The chain is Basic phospholipase A2 homolog BnSP-7 from Bothrops pauloensis (Neuwied's lancehead).